The following is a 443-amino-acid chain: Spermidine hydroxycinnamoyltransferase 1 (443 aa).

Active-site proton acceptor residues include His-167 and Asp-390.

Belongs to the plant acyltransferase family.

Functionally, hydroxycinnamoyl transferase that catalyzes the transfer of an acyl from p-coumaryol-CoA to spermidine, to produce coumaroyl spermidine. Can use feruloyl-CoA as acyl donor. Contributes to the natural variation of spermidine-based phenolamides in rice cultivars. The protein is Spermidine hydroxycinnamoyltransferase 1 of Oryza sativa subsp. japonica (Rice).